A 207-amino-acid polypeptide reads, in one-letter code: Probable glutathione S-transferase 5 (207 aa).

A GST N-terminal domain is found at 2 to 81; that stretch reads VSYKLTYFNG…FLAREFKLNG (80 aa). Residues Tyr-8, Trp-39, Lys-43, 51-53, and 65-66 contribute to the glutathione site; these read GQL and QS. Residues 83 to 207 enclose the GST C-terminal domain; sequence TAWEEAQVNS…WIETRPVTPF (125 aa).

Belongs to the GST superfamily. Sigma family.

The catalysed reaction is RX + glutathione = an S-substituted glutathione + a halide anion + H(+). Functionally, conjugation of reduced glutathione to a wide number of exogenous and endogenous hydrophobic electrophiles. May play a role in the detoxification of reactive oxygen species produced during pathogenic bacterial infection. This Caenorhabditis elegans protein is Probable glutathione S-transferase 5 (gst-5).